The chain runs to 571 residues: Methionine--tRNA ligase (571 aa).

Positions 10 to 20 (PYVNAVPHLGN) match the 'HIGH' region motif. The Zn(2+) site is built by C143, C146, C156, and C159. The short motif at 333–337 (KFSKS) is the 'KMSKS' region element. Residue K336 participates in ATP binding.

This sequence belongs to the class-I aminoacyl-tRNA synthetase family. MetG type 1 subfamily. Requires Zn(2+) as cofactor.

It is found in the cytoplasm. The enzyme catalyses tRNA(Met) + L-methionine + ATP = L-methionyl-tRNA(Met) + AMP + diphosphate. Its function is as follows. Is required not only for elongation of protein synthesis but also for the initiation of all mRNA translation through initiator tRNA(fMet) aminoacylation. The protein is Methionine--tRNA ligase of Sulfurisphaera tokodaii (strain DSM 16993 / JCM 10545 / NBRC 100140 / 7) (Sulfolobus tokodaii).